Reading from the N-terminus, the 339-residue chain is uncharacterized protein (339 aa).

It to bacterial alkanal monooxygenase alpha and beta chains.

This is an uncharacterized protein from Bacillus subtilis (strain 168).